The following is a 611-amino-acid chain: Threonine--tRNA ligase (611 aa).

Residues 211-509 (DHRKLGTELE…LTEHYAGEFP (299 aa)) form a catalytic region. Zn(2+) is bound by residues Cys310, His361, and His486.

This sequence belongs to the class-II aminoacyl-tRNA synthetase family. Homodimer. Zn(2+) serves as cofactor.

The protein localises to the cytoplasm. It carries out the reaction tRNA(Thr) + L-threonine + ATP = L-threonyl-tRNA(Thr) + AMP + diphosphate + H(+). Catalyzes the attachment of threonine to tRNA(Thr) in a two-step reaction: L-threonine is first activated by ATP to form Thr-AMP and then transferred to the acceptor end of tRNA(Thr). Also edits incorrectly charged L-seryl-tRNA(Thr). The protein is Threonine--tRNA ligase of Nautilia profundicola (strain ATCC BAA-1463 / DSM 18972 / AmH).